The following is a 318-amino-acid chain: 26 kDa endochitinase 1 (318 aa).

The first 19 residues, 1 to 19 (MRAFVLFAVVAMAATMAVA), serve as a signal peptide directing secretion. Residues 20 to 59 (EQCGSQAGGATCPNCLCCSRFGWCGSTPYCGDGCQSQCSG) form the Chitin-binding type-1 domain. Disulfide bonds link C22-C37, C31-C43, C36-C49, C53-C57, C98-C160, C172-C180, and C279-C311. Catalysis depends on E142, which acts as the Proton donor.

It belongs to the glycosyl hydrolase 19 family. Chitinase class I subfamily.

The enzyme catalyses Random endo-hydrolysis of N-acetyl-beta-D-glucosaminide (1-&gt;4)-beta-linkages in chitin and chitodextrins.. Its function is as follows. Defense against chitin-containing fungal pathogens. The sequence is that of 26 kDa endochitinase 1 from Hordeum vulgare (Barley).